We begin with the raw amino-acid sequence, 31 residues long: Cytochrome b6-f complex subunit 6 (31 aa).

A helical transmembrane segment spans residues 4-24; sequence ILTYFGILFGILTITVIIFVA.

It belongs to the PetL family. In terms of assembly, the 4 large subunits of the cytochrome b6-f complex are cytochrome b6, subunit IV (17 kDa polypeptide, PetD), cytochrome f and the Rieske protein, while the 4 small subunits are PetG, PetL, PetM and PetN. The complex functions as a dimer.

Its subcellular location is the plastid. The protein localises to the chloroplast thylakoid membrane. Its function is as follows. Component of the cytochrome b6-f complex, which mediates electron transfer between photosystem II (PSII) and photosystem I (PSI), cyclic electron flow around PSI, and state transitions. PetL is important for photoautotrophic growth as well as for electron transfer efficiency and stability of the cytochrome b6-f complex. In Chaetosphaeridium globosum (Charophycean green alga), this protein is Cytochrome b6-f complex subunit 6.